The following is a 101-amino-acid chain: Small ribosomal subunit protein uS14 (101 aa).

The protein belongs to the universal ribosomal protein uS14 family. In terms of assembly, part of the 30S ribosomal subunit. Contacts proteins S3 and S10.

Binds 16S rRNA, required for the assembly of 30S particles and may also be responsible for determining the conformation of the 16S rRNA at the A site. The chain is Small ribosomal subunit protein uS14 from Salmonella schwarzengrund (strain CVM19633).